The sequence spans 194 residues: Adenylate kinase (194 aa).

8-16 (GIPGVGKST) is a binding site for ATP.

This sequence belongs to the archaeal adenylate kinase family. In terms of assembly, homotrimer.

The protein resides in the cytoplasm. The catalysed reaction is AMP + ATP = 2 ADP. The chain is Adenylate kinase (adkA) from Sulfolobus acidocaldarius (strain ATCC 33909 / DSM 639 / JCM 8929 / NBRC 15157 / NCIMB 11770).